Reading from the N-terminus, the 92-residue chain is NELL2-interacting cell ontogeny regulator 1 (92 aa).

A signal peptide spans 1–30 (MALPSAWSVMRVVIPFISVLGLLGVRLVGA).

The protein belongs to the NICOL family.

It localises to the secreted. The protein resides in the cytoplasm. Its subcellular location is the perinuclear region. Functionally, mRNA-binding protein which interacts with a range of target mRNAs and may promote extracellular matrix production. May function as a component of lumicrine signaling and may play a crucial role in epididymal-mediated sperm maturation and male fertility. The protein is NELL2-interacting cell ontogeny regulator 1 of Gallus gallus (Chicken).